A 608-amino-acid chain; its full sequence is Albumin (608 aa).

An N-terminal signal peptide occupies residues 1–18; that stretch reads MKWVTFLLLLFVSDSAFS. The propeptide occupies 19-24; that stretch reads RGLFRR. 3 consecutive Albumin domains span residues 19 to 211, 212 to 403, and 404 to 601; these read RGLF…ALKE, KALA…EFQP, and LVEE…KLVA. Histidine 27 provides a ligand contact to Cu cation. Serine 29 is subject to Phosphoserine. The Ca(2+) site is built by glutamate 30 and aspartate 37. Cysteine 77 and cysteine 86 are disulfide-bonded. A phosphoserine mark is found at serine 82 and serine 89. Histidine 91 is a binding site for Zn(2+). Disulfide bonds link cysteine 99-cysteine 115, cysteine 114-cysteine 125, cysteine 148-cysteine 193, cysteine 192-cysteine 201, cysteine 224-cysteine 270, and cysteine 269-cysteine 277. Glutamate 268 is a binding site for Ca(2+). Residues histidine 271 and aspartate 273 each coordinate Zn(2+). Positions 273, 276, and 279 each coordinate Ca(2+). Disulfide bonds link cysteine 289-cysteine 303, cysteine 302-cysteine 313, cysteine 340-cysteine 385, cysteine 384-cysteine 393, cysteine 416-cysteine 462, cysteine 461-cysteine 472, cysteine 485-cysteine 501, and cysteine 500-cysteine 511. Residue serine 297 is modified to Phosphoserine. Serine 443 is modified (phosphoserine). A phosphothreonine mark is found at threonine 444 and threonine 446. Lysine 460 bears the N6-succinyllysine mark. At serine 513 the chain carries Phosphoserine. Intrachain disulfides connect cysteine 538-cysteine 583 and cysteine 582-cysteine 591. An N6-succinyllysine modification is found at lysine 543. The residue at position 558 (lysine 558) is an N6-methyllysine. Threonine 570 carries the post-translational modification Phosphothreonine. An N6-succinyllysine modification is found at lysine 588.

The protein belongs to the ALB/AFP/VDB family. As to quaternary structure, interacts with FCGRT; this interaction regulates ALB homeostasis. Interacts with TASOR. In plasma, occurs in a covalently-linked complex with chromophore-bound alpha-1-microglobulin; this interaction does not prevent fatty acid binding to ALB. Plasma.

It is found in the secreted. Functionally, binds water, Ca(2+), Na(+), K(+), fatty acids, hormones, bilirubin and drugs. Its main function is the regulation of the colloidal osmotic pressure of blood. Major zinc transporter in plasma, typically binds about 80% of all plasma zinc. Major calcium and magnesium transporter in plasma, binds approximately 45% of circulating calcium and magnesium in plasma. Potentially has more than two calcium-binding sites and might additionally bind calcium in a non-specific manner. The shared binding site between zinc and calcium at residue Asp-273 suggests a crosstalk between zinc and calcium transport in the blood. The rank order of affinity is zinc &gt; calcium &gt; magnesium. Binds to the bacterial siderophore enterobactin and inhibits enterobactin-mediated iron uptake of E.coli from ferric transferrin, and may thereby limit the utilization of iron and growth of enteric bacteria such as E.coli. Does not prevent iron uptake by the bacterial siderophore aerobactin. The sequence is that of Albumin from Mesocricetus auratus (Golden hamster).